Reading from the N-terminus, the 254-residue chain is Allene oxide cyclase 1, chloroplastic (254 aa).

A chloroplast-targeting transit peptide spans Met1–Arg78. The span at Ser44 to Thr56 shows a compositional bias: low complexity. Residues Ser44–Pro79 are disordered. Residues Arg65 to Pro77 show a composition bias toward polar residues.

The protein belongs to the allene oxide cyclase family. In terms of tissue distribution, highly expressed in fully developed leaves.

The protein localises to the plastid. It is found in the chloroplast. It catalyses the reaction (9Z,13S,15Z)-12,13-epoxyoctadeca-9,11,15-trienoate = (9S,13S,15Z)-12-oxophyto-10,15-dienoate. In terms of biological role, involved in the production of 12-oxo-phytodienoic acid (OPDA), a precursor of jasmonic acid. This Arabidopsis thaliana (Mouse-ear cress) protein is Allene oxide cyclase 1, chloroplastic (AOC1).